Reading from the N-terminus, the 403-residue chain is Prostaglandin E2 receptor EP1 subtype (403 aa).

The Extracellular segment spans residues 1–38; that stretch reads MSLCGPLNLSLAGEATPCAEPGAPNASAWPPSGRASAS. N8 and N25 each carry an N-linked (GlcNAc...) asparagine glycan. Residues 39-65 form a helical membrane-spanning segment; that stretch reads PALPIFSMTLGAVSNVLALALLAQAAG. The Cytoplasmic portion of the chain corresponds to 66–75; the sequence is RLRRRRSAAT. Residues 76-99 traverse the membrane as a helical segment; that stretch reads FLLFVASLLATDLAGHVIPGALVL. Residues 100–114 lie on the Extracellular side of the membrane; sequence RLYAAGRSPAGGACH. A disulfide bridge connects residues C113 and C191. A helical transmembrane segment spans residues 115–136; that stretch reads FLGGCMVFFGLCPLLLGCGMAV. Residues 137 to 158 lie on the Cytoplasmic side of the membrane; it reads ERCVGVTRPLLHAARVSAARAR. Residues 159–180 traverse the membrane as a helical segment; the sequence is LALAVLAALALAVALLPLARVG. Residues 181–204 are Extracellular-facing; that stretch reads RYELQYPGTWCFIGLRPAGGWRQA. A helical membrane pass occupies residues 205-230; the sequence is LLAGLFAGLGLAALLAALVCNTLSGL. The Cytoplasmic segment spans residues 231-295; it reads ALLRARWRRR…ARRARAHDVE (65 aa). The tract at residues 243–287 is disordered; that stretch reads RRRPQACGPDGRRHWGARAPRSASASSSSSVASVPGGSPGRGSAR. Over residues 259–278 the composition is skewed to low complexity; the sequence is ARAPRSASASSSSSVASVPG. The helical transmembrane segment at 296–322 threads the bilayer; it reads MVGQLVGIMVVSCICWSPLLVLVVLAV. The Extracellular portion of the chain corresponds to 323-333; the sequence is GGWGSSSLQRP. A helical transmembrane segment spans residues 334-355; the sequence is LFLAVRLASWNQILDPWVYILL. Residues 356–403 lie on the Cytoplasmic side of the membrane; sequence RQAVLRQLLRLLPPRPGAKGSPAGLALTRSAWEASSLRSSRHSSLSHL.

This sequence belongs to the G-protein coupled receptor 1 family.

It localises to the cell membrane. Its function is as follows. Receptor for prostaglandin E2 (PGE2). The activity of this receptor is mediated by G(q) proteins which activate a phosphatidylinositol-calcium second messenger system. May play a role as an important modulator of renal function. Implicated the smooth muscle contractile response to PGE2 in various tissues. This Canis lupus familiaris (Dog) protein is Prostaglandin E2 receptor EP1 subtype (PTGER1).